A 549-amino-acid chain; its full sequence is Chaperonin GroEL (549 aa).

ATP is bound by residues T30–P33, K51, D87–T91, G415, and D496.

It belongs to the chaperonin (HSP60) family. As to quaternary structure, forms a cylinder of 14 subunits composed of two heptameric rings stacked back-to-back. Interacts with the co-chaperonin GroES.

It localises to the cytoplasm. The catalysed reaction is ATP + H2O + a folded polypeptide = ADP + phosphate + an unfolded polypeptide.. In terms of biological role, together with its co-chaperonin GroES, plays an essential role in assisting protein folding. The GroEL-GroES system forms a nano-cage that allows encapsulation of the non-native substrate proteins and provides a physical environment optimized to promote and accelerate protein folding. The sequence is that of Chaperonin GroEL from Prosthecochloris aestuarii (strain DSM 271 / SK 413).